Reading from the N-terminus, the 128-residue chain is Small ribosomal subunit protein uS9 (128 aa).

Positions 97 to 113 (RSEGFMTRDPRSVERKK) are enriched in basic and acidic residues. The interval 97–128 (RSEGFMTRDPRSVERKKPGQPKARRRFQFSKR) is disordered. Over residues 114 to 128 (PGQPKARRRFQFSKR) the composition is skewed to basic residues.

It belongs to the universal ribosomal protein uS9 family.

This Bacteroides fragilis (strain ATCC 25285 / DSM 2151 / CCUG 4856 / JCM 11019 / LMG 10263 / NCTC 9343 / Onslow / VPI 2553 / EN-2) protein is Small ribosomal subunit protein uS9.